The primary structure comprises 931 residues: Synaptopodin (931 aa).

2 disordered regions span residues 56 to 78 and 113 to 243; these read EEEG…APAI and ASVS…MEGY. Ser-134 is modified (phosphoserine). Residues 136-148 are compositionally biased toward basic and acidic residues; that stretch reads TEKDLKEAKERSQ. Composition is skewed to polar residues over residues 153-164 and 188-200; these read QLTTPPSSNSRG and PKLS…TGHP. 3 positions are modified to phosphoserine: Ser-202, Ser-222, and Ser-258. Positions 214–232 are enriched in low complexity; sequence PTSPSKPGSPKHSSSQSPS. Positions 280–420 are disordered; the sequence is GLHLSQNRET…SSSGPPAADL (141 aa). 2 stretches are compositionally biased toward polar residues: residues 282 to 293 and 309 to 370; these read HLSQNRETQQSS and INQN…NTPS. The segment covering 373-384 has biased composition (basic and acidic residues); that stretch reads DGQRPVPAEEVR. Phosphoserine is present on residues Ser-490 and Ser-514. Disordered stretches follow at residues 542–591 and 691–711; these read RRPL…KGQV and SPRI…EASG. Thr-549 bears the Phosphothreonine mark. The PPxY motif signature appears at 551–554; the sequence is PPTY. Polar residues predominate over residues 556–568; that stretch reads ETLSTAPVASQVR. The residue at position 569 (Ser-569) is a Phosphoserine. A compositionally biased stretch (low complexity) spans 569–580; the sequence is SPPSYSTLYPSS. A PPxY motif motif is present at residues 570-573; sequence PPSY. 4 positions are modified to phosphoserine: Ser-691, Ser-742, Ser-746, and Ser-767. Phosphothreonine is present on Thr-771. The segment at 775–918 is disordered; sequence SLYHGYLPEN…RPSFSTRNAG (144 aa). Positions 816 to 841 are enriched in low complexity; the sequence is SSRATSSRASSRTVSPRAASPAKPSS. Residue Ser-835 is modified to Phosphoserine. Arg-850 carries the omega-N-methylarginine modification. A Phosphoserine modification is found at Ser-856. The span at 874-895 shows a compositional bias: polar residues; sequence VQDSLQPTAVSPTYSSDISPVS.

It belongs to the synaptopodin family. In terms of assembly, interacts with BAIAP1. Interacts with actin. Interacts (via PPxY motifs) with WWC1 (via WW domains). O-glycosylated. Expressed at high levels in brain and at moderate, but still significant levels in the heart, skeletal muscle, lung and kidney. In brain, expressed in the cerebral cortex, hippocampus, olfactory bulb and striatum.

It is found in the cytoplasm. The protein resides in the cytoskeleton. Its subcellular location is the cell junction. It localises to the tight junction. The protein localises to the perikaryon. It is found in the cell projection. The protein resides in the dendritic spine. Its subcellular location is the postsynaptic density. It localises to the synapse. The protein localises to the cytosol. Its function is as follows. Actin-associated protein that may play a role in modulating actin-based shape and motility of dendritic spines and renal podocyte foot processes. Seems to be essential for the formation of spine apparatuses in spines of telencephalic neurons, which is involved in synaptic plasticity. The sequence is that of Synaptopodin (Synpo) from Rattus norvegicus (Rat).